The following is a 494-amino-acid chain: Protein nucleotidyltransferase YdiU (494 aa).

Positions 99, 101, 102, 118, 130, 131, 181, and 188 each coordinate ATP. Asp-261 acts as the Proton acceptor in catalysis. Positions 262 and 271 each coordinate Mg(2+). Residue Asp-271 participates in ATP binding.

The protein belongs to the SELO family. Mg(2+) serves as cofactor. It depends on Mn(2+) as a cofactor.

The catalysed reaction is L-seryl-[protein] + ATP = 3-O-(5'-adenylyl)-L-seryl-[protein] + diphosphate. It carries out the reaction L-threonyl-[protein] + ATP = 3-O-(5'-adenylyl)-L-threonyl-[protein] + diphosphate. The enzyme catalyses L-tyrosyl-[protein] + ATP = O-(5'-adenylyl)-L-tyrosyl-[protein] + diphosphate. It catalyses the reaction L-histidyl-[protein] + UTP = N(tele)-(5'-uridylyl)-L-histidyl-[protein] + diphosphate. The catalysed reaction is L-seryl-[protein] + UTP = O-(5'-uridylyl)-L-seryl-[protein] + diphosphate. It carries out the reaction L-tyrosyl-[protein] + UTP = O-(5'-uridylyl)-L-tyrosyl-[protein] + diphosphate. Functionally, nucleotidyltransferase involved in the post-translational modification of proteins. It can catalyze the addition of adenosine monophosphate (AMP) or uridine monophosphate (UMP) to a protein, resulting in modifications known as AMPylation and UMPylation. This chain is Protein nucleotidyltransferase YdiU, found in Variovorax paradoxus (strain S110).